A 389-amino-acid chain; its full sequence is Chalcone synthase 1 (389 aa).

C164 is a catalytic residue.

This sequence belongs to the thiolase-like superfamily. Chalcone/stilbene synthases family.

It catalyses the reaction (E)-4-coumaroyl-CoA + 3 malonyl-CoA + 3 H(+) = 2',4,4',6'-tetrahydroxychalcone + 3 CO2 + 4 CoA. Its pathway is secondary metabolite biosynthesis; flavonoid biosynthesis. Functionally, the primary product of this enzyme is 4,2',4',6'-tetrahydroxychalcone (also termed naringenin-chalcone or chalcone) which can under specific conditions spontaneously isomerize into naringenin. The chain is Chalcone synthase 1 (CHS1) from Trifolium subterraneum (Subterranean clover).